The chain runs to 155 residues: Large ribosomal subunit protein uL22 (155 aa).

Residues H109–E155 are disordered. Positions K146–E155 are enriched in basic and acidic residues.

The protein belongs to the universal ribosomal protein uL22 family. As to quaternary structure, part of the 50S ribosomal subunit.

Functionally, this protein binds specifically to 23S rRNA; its binding is stimulated by other ribosomal proteins, e.g. L4, L17, and L20. It is important during the early stages of 50S assembly. It makes multiple contacts with different domains of the 23S rRNA in the assembled 50S subunit and ribosome. Its function is as follows. The globular domain of the protein is located near the polypeptide exit tunnel on the outside of the subunit, while an extended beta-hairpin is found that lines the wall of the exit tunnel in the center of the 70S ribosome. This is Large ribosomal subunit protein uL22 from Mycolicibacterium vanbaalenii (strain DSM 7251 / JCM 13017 / BCRC 16820 / KCTC 9966 / NRRL B-24157 / PYR-1) (Mycobacterium vanbaalenii).